We begin with the raw amino-acid sequence, 70 residues long: uncharacterized protein (70 aa).

2 helical membrane passes run 19-39 (VIAL…VVGL) and 40-60 (LFKL…VRKF).

The protein localises to the cell membrane. This is an uncharacterized protein from Streptomyces coelicolor (strain ATCC BAA-471 / A3(2) / M145).